The primary structure comprises 201 residues: Auxin-binding protein 1 (201 aa).

A signal peptide spans 1–38; that stretch reads MAPDLSELAAAAAARGAYLAGVGVAVLLAASFLPVAES. A disulfide bridge links Cys40 with Cys193. Positions 95, 97, and 101 each coordinate Zn(2+). The N-linked (GlcNAc...) asparagine glycan is linked to Asn133. His144 provides a ligand contact to Zn(2+). A Prevents secretion from ER motif is present at residues 198–201; sequence KDEL.

As to quaternary structure, homodimer. Post-translationally, glycosylated. Expressed in roots, coleoptiles, leaves, stems, tassels and ears.

The protein resides in the endoplasmic reticulum lumen. Its function is as follows. Receptor for the plant hormone auxin. This Zea mays (Maize) protein is Auxin-binding protein 1.